A 442-amino-acid polypeptide reads, in one-letter code: D-serine dehydratase (442 aa).

Lysine 118 bears the N6-(pyridoxal phosphate)lysine mark.

This sequence belongs to the serine/threonine dehydratase family. DsdA subfamily. In terms of assembly, monomer. Requires pyridoxal 5'-phosphate as cofactor.

It carries out the reaction D-serine = pyruvate + NH4(+). The chain is D-serine dehydratase from Shigella dysenteriae serotype 1 (strain Sd197).